The chain runs to 887 residues: MPSLNEIRSTFLNFFGGHGHEIVDSSPLVPRNDPTLMFTNAGMVQFKNVFTGLEHRDYNRATTSQKCVRAGGKHNDLDNVGYTARHHTFFEMLGNFSFGDYFKEDAIPFAWDLITKEFGIDKSRLLVTVYHTDDEAAEIWKKHAGLSDDRIIRIPTNDNFWMMGPTGPCGPCTEIFYDHGDHIWGGPPGSPEEDGDRFIEIWNLVFMQFEQFEDGTREPLPKPSIDTGMGLERIGALLQGSHDNYDTDLFKTLIEASAHATSVDPYGDKNVHHRVIADHLRSTSFLIADGVMPSNEGRGYVLRRIMRRAMRHAHLLGAQDPVMYRLVPALVGQMGQAFPELGRAQALIEETLMLEETRFRQTLDRGLKLLDEAVADVPEGGALPGETAFKLYDTYGFPLDLTQDALREKGRAVETEGFDAAMADQKAKARAAWAGSGETADESIWFDLAETHGATEFLGYDTEVAEGQVLALVKDGAQVAQLAEGETGWMVLNQTPFYAESGGQVGDSGGYLKSNGSGAIHDTQKRNGLFAHKVTPKAQPLKAGDVLEMRVDPARRTAIRANHSATHLLHEALRQALGAHVAQRGSLNAADRLRFDFSHSKALTLEELQKVEAEVNAYIRQNSPVETRIMTPDAARDLGAQALFGEKYGDEVRVVSMGRQSGSGKGVSGETYSLELCGGTHVKQTGDIGVFVTVGETASSSGVRRIEALTGEDAFAYLSAQDYRLAEVAASLKAQAADVPERVRSLLDERKALQNEVAQLRRELAMAGGGQGTAAPEAEAVAGVPFLAQSLSGVSGRDLPSLIDEHKARLGSGAILLIADTGGKAAVAAGVTADLTDRLSAVDLVKAAVAELGGKGGGGRPDMAQGGGKDASKADAAIAAAKAVIGG.

Residues histidine 563, histidine 567, cysteine 677, and histidine 681 each coordinate Zn(2+).

The protein belongs to the class-II aminoacyl-tRNA synthetase family. Requires Zn(2+) as cofactor.

Its subcellular location is the cytoplasm. It carries out the reaction tRNA(Ala) + L-alanine + ATP = L-alanyl-tRNA(Ala) + AMP + diphosphate. Catalyzes the attachment of alanine to tRNA(Ala) in a two-step reaction: alanine is first activated by ATP to form Ala-AMP and then transferred to the acceptor end of tRNA(Ala). Also edits incorrectly charged Ser-tRNA(Ala) and Gly-tRNA(Ala) via its editing domain. The polypeptide is Alanine--tRNA ligase (Dinoroseobacter shibae (strain DSM 16493 / NCIMB 14021 / DFL 12)).